We begin with the raw amino-acid sequence, 430 residues long: S-adenosylmethionine synthase (430 aa).

Histidine 14 contacts ATP. Aspartate 16 lines the Mg(2+) pocket. Glutamate 42 serves as a coordination point for K(+). Residues glutamate 55 and glutamine 98 each contribute to the L-methionine site. Residues 98–108 are flexible loop; it reads QSADINRGVER. ATP is bound by residues 164–166, 254–255, aspartate 263, 269–270, alanine 286, and lysine 290; these read DAK, KF, and RK. Aspartate 263 is an L-methionine binding site. Lysine 294 is an L-methionine binding site.

This sequence belongs to the AdoMet synthase family. In terms of assembly, homotetramer; dimer of dimers. Requires Mg(2+) as cofactor. The cofactor is K(+).

The protein resides in the cytoplasm. It carries out the reaction L-methionine + ATP + H2O = S-adenosyl-L-methionine + phosphate + diphosphate. It participates in amino-acid biosynthesis; S-adenosyl-L-methionine biosynthesis; S-adenosyl-L-methionine from L-methionine: step 1/1. In terms of biological role, catalyzes the formation of S-adenosylmethionine (AdoMet) from methionine and ATP. The overall synthetic reaction is composed of two sequential steps, AdoMet formation and the subsequent tripolyphosphate hydrolysis which occurs prior to release of AdoMet from the enzyme. The sequence is that of S-adenosylmethionine synthase from Phocaeicola vulgatus (strain ATCC 8482 / DSM 1447 / JCM 5826 / CCUG 4940 / NBRC 14291 / NCTC 11154) (Bacteroides vulgatus).